A 237-amino-acid chain; its full sequence is Phosphatidylserine decarboxylase proenzyme (237 aa).

Residue Ser206 is the Schiff-base intermediate with substrate; via pyruvic acid of the active site. The residue at position 206 (Ser206) is a Pyruvic acid (Ser); by autocatalysis.

The protein belongs to the phosphatidylserine decarboxylase family. PSD-A subfamily. In terms of assembly, heterodimer of a large membrane-associated beta subunit and a small pyruvoyl-containing alpha subunit. Pyruvate serves as cofactor. In terms of processing, is synthesized initially as an inactive proenzyme. Formation of the active enzyme involves a self-maturation process in which the active site pyruvoyl group is generated from an internal serine residue via an autocatalytic post-translational modification. Two non-identical subunits are generated from the proenzyme in this reaction, and the pyruvate is formed at the N-terminus of the alpha chain, which is derived from the carboxyl end of the proenzyme. The post-translation cleavage follows an unusual pathway, termed non-hydrolytic serinolysis, in which the side chain hydroxyl group of the serine supplies its oxygen atom to form the C-terminus of the beta chain, while the remainder of the serine residue undergoes an oxidative deamination to produce ammonia and the pyruvoyl prosthetic group on the alpha chain.

Its subcellular location is the cell membrane. The enzyme catalyses a 1,2-diacyl-sn-glycero-3-phospho-L-serine + H(+) = a 1,2-diacyl-sn-glycero-3-phosphoethanolamine + CO2. The protein operates within phospholipid metabolism; phosphatidylethanolamine biosynthesis; phosphatidylethanolamine from CDP-diacylglycerol: step 2/2. Its function is as follows. Catalyzes the formation of phosphatidylethanolamine (PtdEtn) from phosphatidylserine (PtdSer). This is Phosphatidylserine decarboxylase proenzyme from Rhodococcus jostii (strain RHA1).